We begin with the raw amino-acid sequence, 244 residues long: Ribonuclease 3 (244 aa).

The RNase III domain occupies 7 to 134 (FEEVEKTLNI…IIAAIYIDSG (128 aa)). Glu47 is a binding site for Mg(2+). Residue Asp51 is part of the active site. 2 residues coordinate Mg(2+): Asn120 and Glu123. The active site involves Glu123. A DRBM domain is found at 161 to 230 (DYKTNLQEIV…AQDALKKLKS (70 aa)).

It belongs to the ribonuclease III family. In terms of assembly, homodimer. It depends on Mg(2+) as a cofactor.

It is found in the cytoplasm. It carries out the reaction Endonucleolytic cleavage to 5'-phosphomonoester.. In terms of biological role, digests double-stranded RNA. Involved in the processing of primary rRNA transcript to yield the immediate precursors to the large and small rRNAs (23S and 16S). Processes some mRNAs, and tRNAs when they are encoded in the rRNA operon. Processes pre-crRNA and tracrRNA of type II CRISPR loci if present in the organism. The chain is Ribonuclease 3 from Clostridium kluyveri (strain NBRC 12016).